Here is a 460-residue protein sequence, read N- to C-terminus: Serine--tRNA ligase (460 aa).

L-serine is bound at residue 242–244; that stretch reads TAE. ATP contacts are provided by residues 273-275 and Val289; that span reads RRE. Glu296 contacts L-serine. 369-372 provides a ligand contact to ATP; the sequence is EVSS. Ser405 lines the L-serine pocket.

Belongs to the class-II aminoacyl-tRNA synthetase family. Type-1 seryl-tRNA synthetase subfamily. In terms of assembly, homodimer. The tRNA molecule binds across the dimer.

The protein resides in the cytoplasm. The enzyme catalyses tRNA(Ser) + L-serine + ATP = L-seryl-tRNA(Ser) + AMP + diphosphate + H(+). It catalyses the reaction tRNA(Sec) + L-serine + ATP = L-seryl-tRNA(Sec) + AMP + diphosphate + H(+). It functions in the pathway aminoacyl-tRNA biosynthesis; selenocysteinyl-tRNA(Sec) biosynthesis; L-seryl-tRNA(Sec) from L-serine and tRNA(Sec): step 1/1. Its function is as follows. Catalyzes the attachment of serine to tRNA(Ser). Is also able to aminoacylate tRNA(Sec) with serine, to form the misacylated tRNA L-seryl-tRNA(Sec), which will be further converted into selenocysteinyl-tRNA(Sec). The chain is Serine--tRNA ligase from Haloquadratum walsbyi (strain DSM 16790 / HBSQ001).